The chain runs to 475 residues: UDP-N-acetylmuramate--L-alanine ligase (475 aa).

An ATP-binding site is contributed by 125 to 131 (GTHGKTT).

This sequence belongs to the MurCDEF family.

Its subcellular location is the cytoplasm. The enzyme catalyses UDP-N-acetyl-alpha-D-muramate + L-alanine + ATP = UDP-N-acetyl-alpha-D-muramoyl-L-alanine + ADP + phosphate + H(+). It functions in the pathway cell wall biogenesis; peptidoglycan biosynthesis. Functionally, cell wall formation. This Glaesserella parasuis serovar 5 (strain SH0165) (Haemophilus parasuis) protein is UDP-N-acetylmuramate--L-alanine ligase.